The primary structure comprises 128 residues: MFYSIVAIFVGAGLGALLRWFLSLALNEFFPAVPLGTLAANLIGGYVIGIAAVVFTTRVGLPPEWRLFVITGFLGGLTTFSTYSVEVMTHAVQGEFGWAFAVAALHLTGSFALTALGMWTARAWLAAA.

Transmembrane regions (helical) follow at residues 5 to 25, 35 to 55, 67 to 87, and 96 to 116; these read IVAI…LSLA, LGTL…AVVF, LFVI…SVEV, and FGWA…LTAL. Glycine 75 and threonine 78 together coordinate Na(+).

Belongs to the fluoride channel Fluc/FEX (TC 1.A.43) family.

Its subcellular location is the cell inner membrane. The catalysed reaction is fluoride(in) = fluoride(out). Its activity is regulated as follows. Na(+) is not transported, but it plays an essential structural role and its presence is essential for fluoride channel function. Its function is as follows. Fluoride-specific ion channel. Important for reducing fluoride concentration in the cell, thus reducing its toxicity. The polypeptide is Fluoride-specific ion channel FluC (Burkholderia lata (strain ATCC 17760 / DSM 23089 / LMG 22485 / NCIMB 9086 / R18194 / 383)).